Here is a 343-residue protein sequence, read N- to C-terminus: Low conductance mechanosensitive channel YnaI (343 aa).

Topologically, residues 1–9 (MIAELFTNN) are periplasmic. Residues 10–30 (ALNLVIIFGSCAALILMSFWF) form a helical membrane-spanning segment. Topologically, residues 31–40 (RRGNRKRKGF) are cytoplasmic. A helical transmembrane segment spans residues 41 to 61 (LFHAVQFLIYTIIISAVGSII). Topologically, residues 62–77 (NYVIENYKLKFITPGV) are periplasmic. Residues 78–98 (IDFICTSLIAVILTIKLFLLI) traverse the membrane as a helical segment. The Cytoplasmic portion of the chain corresponds to 99–125 (NQFEKQQIKKGRDITSARIMSRIIKIT). A helical transmembrane segment spans residues 126 to 146 (IIVVLVLLYGEHFGMSLSGLL). Residue Thr-147 is a topological domain, periplasmic. A helical membrane pass occupies residues 148 to 168 (FGGIGGLAVGMAGKDILSNFF). Over 169–343 (SGIMLYFDRP…DNITPPEQGR (175 aa)) the chain is Cytoplasmic.

Belongs to the MscS (TC 1.A.23) family. As to quaternary structure, homoheptamer.

The protein localises to the cell inner membrane. Mechanosensitive channel that protects cells against hypoosmotic stress when highly overexpressed. This chain is Low conductance mechanosensitive channel YnaI (ynaI), found in Escherichia coli (strain K12).